Here is a 204-residue protein sequence, read N- to C-terminus: Neurensin-2 (204 aa).

The next 2 helical transmembrane spans lie at Leu66–Val86 and Leu122–Leu142. Positions Ser178–Ser204 are disordered. Over residues Phe190–Ser204 the composition is skewed to polar residues.

It belongs to the VMP family.

It localises to the membrane. May play a role in maintenance and/or transport of vesicles. This Homo sapiens (Human) protein is Neurensin-2 (NRSN2).